The chain runs to 199 residues: Probable molybdenum cofactor guanylyltransferase (199 aa).

Residues 9-11 (LAG), lysine 21, aspartate 69, and aspartate 100 contribute to the GTP site. Aspartate 100 contacts Mg(2+).

It belongs to the MobA family. Mg(2+) serves as cofactor.

It is found in the cytoplasm. The enzyme catalyses Mo-molybdopterin + GTP + H(+) = Mo-molybdopterin guanine dinucleotide + diphosphate. Transfers a GMP moiety from GTP to Mo-molybdopterin (Mo-MPT) cofactor (Moco or molybdenum cofactor) to form Mo-molybdopterin guanine dinucleotide (Mo-MGD) cofactor. This chain is Probable molybdenum cofactor guanylyltransferase, found in Bacillus cytotoxicus (strain DSM 22905 / CIP 110041 / 391-98 / NVH 391-98).